The sequence spans 434 residues: UDP-N-acetylmuramate--L-alanine ligase (434 aa).

108–114 (GSHGKTT) serves as a coordination point for ATP.

It belongs to the MurCDEF family.

Its subcellular location is the cytoplasm. The catalysed reaction is UDP-N-acetyl-alpha-D-muramate + L-alanine + ATP = UDP-N-acetyl-alpha-D-muramoyl-L-alanine + ADP + phosphate + H(+). Its pathway is cell wall biogenesis; peptidoglycan biosynthesis. Functionally, cell wall formation. The polypeptide is UDP-N-acetylmuramate--L-alanine ligase (Geobacillus kaustophilus (strain HTA426)).